We begin with the raw amino-acid sequence, 149 residues long: Ribonuclease pancreatic (149 aa).

The signal sequence occupies residues 1 to 25 (MGLEKSFILFSLLVLVLGWVQPSLG). Substrate-binding residues include K32 and R35. The active-site Proton acceptor is the H37. 4 disulfides stabilise this stretch: C51–C109, C65–C120, C83–C135, and C90–C97. Substrate contacts are provided by residues 66-70 (KPVNT), K91, and R110. H144 acts as the Proton donor in catalysis.

This sequence belongs to the pancreatic ribonuclease family. As to quaternary structure, monomer. Interacts with and forms tight 1:1 complexes with RNH1. Dimerization of two such complexes may occur. Interaction with RNH1 inhibits this protein. As to expression, pancreas.

Its subcellular location is the secreted. The enzyme catalyses an [RNA] containing cytidine + H2O = an [RNA]-3'-cytidine-3'-phosphate + a 5'-hydroxy-ribonucleotide-3'-[RNA].. It carries out the reaction an [RNA] containing uridine + H2O = an [RNA]-3'-uridine-3'-phosphate + a 5'-hydroxy-ribonucleotide-3'-[RNA].. Endonuclease that catalyzes the cleavage of RNA on the 3' side of pyrimidine nucleotides. Acts on single-stranded and double-stranded RNA. This chain is Ribonuclease pancreatic (RNASE1), found in Leopoldamys edwardsi (Edwards's long-tailed giant rat).